The following is a 24-amino-acid chain: Lantibiotic 107891 (24 aa).

Thr-2 is modified ((E)-2,3-didehydrobutyrine). The segment at residues 3–7 (SWSLC) is a cross-link (lanthionine (Ser-Cys)). The residue at position 4 (Trp-4) is a 6'-chlorotryptophan. A 2,3-didehydroalanine (Ser) modification is found at Ser-5. Positions 8–11 (TPGC) form a cross-link, beta-methyllanthionine (Thr-Cys). 2 cross-links (lanthionine (Ser-Cys)) span residues 13–20 (SPGGGSNC) and 18–23 (SNCSFC). A 3,4-dihydroxyproline; in form A1 modification is found at Pro-14. At Pro-14 the chain carries 4-hydroxyproline; in form A2. Positions 21–24 (SFCC) form a cross-link, S-(2-aminovinyl)-D-cysteine (Ser-Cys).

It belongs to the type A lantibiotic family. Post-translationally, maturation of lantibiotics involves the enzymatic conversion of Thr, and Ser into dehydrated AA and the formation of thioether bonds with cysteine. The C-terminal lanthionine undergoes decarboxylation. This is followed by membrane translocation and cleavage of the modified precursor. Occurs in 2 forms, A1 contains 3,4-dihydroxyproline at Pro-14, A2 contains 4-hydroxyproline at Pro-14. The patent report does not provide the stereochemistry of the modified prolines. In terms of processing, the patent report does not describe whether the 2,3-didehydrobutyrine is the E- or Z-isomer. In several diagrams it is shown as the E-isomer.

Functionally, lanthionine-containing peptide antibiotic (lantibiotic) active on Gram-positive bacteria. The bactericidal activity of lantibiotics is based on depolarization of energized bacterial cytoplasmic membranes, initiated by the formation of aqueous transmembrane pores. This Microbispora sp. (strain 107891) protein is Lantibiotic 107891.